The following is a 498-amino-acid chain: ATP synthase subunit beta, chloroplastic (498 aa).

172-179 (GGAGVGKT) is an ATP binding site.

This sequence belongs to the ATPase alpha/beta chains family. F-type ATPases have 2 components, CF(1) - the catalytic core - and CF(0) - the membrane proton channel. CF(1) has five subunits: alpha(3), beta(3), gamma(1), delta(1), epsilon(1). CF(0) has four main subunits: a(1), b(1), b'(1) and c(9-12).

It localises to the plastid. Its subcellular location is the chloroplast thylakoid membrane. The catalysed reaction is ATP + H2O + 4 H(+)(in) = ADP + phosphate + 5 H(+)(out). Functionally, produces ATP from ADP in the presence of a proton gradient across the membrane. The catalytic sites are hosted primarily by the beta subunits. This is ATP synthase subunit beta, chloroplastic from Hyphaene coriacea (Ilala palm).